The chain runs to 156 residues: Large ribosomal subunit protein eL24 (156 aa).

A disordered region spans residues 87 to 156; the sequence is LELIKERRSQ…AFQKVHATSR (70 aa). Positions 89–129 are enriched in basic and acidic residues; it reads LIKERRSQKPSDRKAARDVKLAKDKEAKKADKAARKAEKAK. The segment covering 130–147 has biased composition (low complexity); the sequence is SAAAGAQSKVSKQQSKGA.

The protein belongs to the eukaryotic ribosomal protein eL24 family.

In Debaryomyces hansenii (strain ATCC 36239 / CBS 767 / BCRC 21394 / JCM 1990 / NBRC 0083 / IGC 2968) (Yeast), this protein is Large ribosomal subunit protein eL24 (RPL24).